The chain runs to 203 residues: tRNA (pseudouridine(54)-N(1))-methyltransferase (203 aa).

Residues leucine 125, glycine 146, and cysteine 179 each coordinate S-adenosyl-L-methionine.

It belongs to the methyltransferase superfamily. TrmY family. Homodimer.

The protein resides in the cytoplasm. It carries out the reaction pseudouridine(54) in tRNA + S-adenosyl-L-methionine = N(1)-methylpseudouridine(54) in tRNA + S-adenosyl-L-homocysteine + H(+). Functionally, specifically catalyzes the N1-methylation of pseudouridine at position 54 (Psi54) in tRNAs. The polypeptide is tRNA (pseudouridine(54)-N(1))-methyltransferase (Methanopyrus kandleri (strain AV19 / DSM 6324 / JCM 9639 / NBRC 100938)).